Here is a 370-residue protein sequence, read N- to C-terminus: Probable neutral protease 2 homolog TRV_02539 (370 aa).

The N-terminal stretch at 1-19 is a signal peptide; the sequence is MQLVAALAALGALVAPAVA. Positions 20–188 are excised as a propeptide; that stretch reads YPHAPMNETL…SIHSRALQKR (169 aa). 2 cysteine pairs are disulfide-bonded: Cys-196–Cys-267 and Cys-274–Cys-292. Zn(2+) is bound at residue His-316. Glu-317 is a catalytic residue. Zn(2+) contacts are provided by His-320 and Asp-331.

This sequence belongs to the peptidase M35 family. Zn(2+) serves as cofactor.

The protein localises to the secreted. The catalysed reaction is Preferential cleavage of bonds with hydrophobic residues in P1'. Also 3-Asn-|-Gln-4 and 8-Gly-|-Ser-9 bonds in insulin B chain.. In terms of biological role, probable secreted metalloprotease that shows high activities on basic nuclear substrates such as histone and protamine. May be involved in virulence. The protein is Probable neutral protease 2 homolog TRV_02539 of Trichophyton verrucosum (strain HKI 0517).